The chain runs to 434 residues: Enolase (434 aa).

Residue Gln-163 participates in (2R)-2-phosphoglycerate binding. Catalysis depends on Glu-205, which acts as the Proton donor. Mg(2+)-binding residues include Asp-242, Glu-289, and Asp-316. (2R)-2-phosphoglycerate-binding residues include Lys-341, Arg-370, Ser-371, and Lys-392. Lys-341 acts as the Proton acceptor in catalysis.

Belongs to the enolase family. The cofactor is Mg(2+).

The protein resides in the cytoplasm. It is found in the secreted. It localises to the cell surface. The enzyme catalyses (2R)-2-phosphoglycerate = phosphoenolpyruvate + H2O. It functions in the pathway carbohydrate degradation; glycolysis; pyruvate from D-glyceraldehyde 3-phosphate: step 4/5. Functionally, catalyzes the reversible conversion of 2-phosphoglycerate (2-PG) into phosphoenolpyruvate (PEP). It is essential for the degradation of carbohydrates via glycolysis. This is Enolase from Lacticaseibacillus paracasei (strain ATCC 334 / BCRC 17002 / CCUG 31169 / CIP 107868 / KCTC 3260 / NRRL B-441) (Lactobacillus paracasei).